The primary structure comprises 139 residues: Peptide methionine sulfoxide reductase MsrB (139 aa).

A MsrB domain is found at 8 to 130; that stretch reads DREWQRELSP…NSASLQLKTQ (123 aa). The Zn(2+) site is built by Cys47, Cys50, Cys96, and Cys99. The Nucleophile role is filled by Cys119.

Belongs to the MsrB Met sulfoxide reductase family. Zn(2+) is required as a cofactor.

The enzyme catalyses L-methionyl-[protein] + [thioredoxin]-disulfide + H2O = L-methionyl-(R)-S-oxide-[protein] + [thioredoxin]-dithiol. The polypeptide is Peptide methionine sulfoxide reductase MsrB (Acinetobacter baumannii (strain SDF)).